The chain runs to 315 residues: Ribosomal RNA small subunit methyltransferase H (315 aa).

S-adenosyl-L-methionine contacts are provided by residues 37-39 (GGH), Asp-57, Phe-83, Asp-105, and Gln-112.

The protein belongs to the methyltransferase superfamily. RsmH family.

The protein resides in the cytoplasm. The enzyme catalyses cytidine(1402) in 16S rRNA + S-adenosyl-L-methionine = N(4)-methylcytidine(1402) in 16S rRNA + S-adenosyl-L-homocysteine + H(+). In terms of biological role, specifically methylates the N4 position of cytidine in position 1402 (C1402) of 16S rRNA. This is Ribosomal RNA small subunit methyltransferase H from Pseudomonas entomophila (strain L48).